A 595-amino-acid polypeptide reads, in one-letter code: Acriflavine sensitivity control protein acr-2 (595 aa).

Residues 22–49 constitute a DNA-binding region (zn(2)-C6 fungal-type); that stretch reads CYNCHRKRLRCDKSLPACLKCSINGEEC. Over residues 69 to 88 the composition is skewed to low complexity; that stretch reads TTRTTNKTNFNGTNTTTPRT. The tract at residues 69-172 is disordered; the sequence is TTRTTNKTNF…PDDNPDPSSQ (104 aa). Over residues 89–117 the composition is skewed to polar residues; it reads VKSSTPTQAPTPSDSPRQLDTDVTSSSAP. A compositionally biased stretch (low complexity) spans 118 to 138; it reads SHTCSRSTTTSTTTTRISSPT.

The protein localises to the nucleus. Probable transcriptional regulator. The chain is Acriflavine sensitivity control protein acr-2 (acr-2) from Neurospora crassa (strain ATCC 24698 / 74-OR23-1A / CBS 708.71 / DSM 1257 / FGSC 987).